The following is a 1362-amino-acid chain: Dicer-like protein 2-2 (1362 aa).

Positions 30-197 (MLNESLKRNL…EIVESNLGSI (168 aa)) constitute a Helicase ATP-binding domain. 43-50 (MPTGTGKT) provides a ligand contact to ATP. The DEAH box motif lies at 139-142 (DEAH). A Helicase C-terminal domain is found at 343-505 (LLDELSKAYR…KLQNAERRQI (163 aa)). Positions 536–630 (AVGYLYNFCS…VPTQVSDHLE (95 aa)) constitute a Dicer dsRNA-binding fold domain. RNase III domains follow at residues 889 to 1033 (AQIL…TDGG) and 1075 to 1258 (IVDM…IDSQ).

The protein belongs to the helicase family. Dicer subfamily.

Its function is as follows. Dicer-like endonuclease involved in cleaving double-stranded RNA in the RNA interference (RNAi) pathway. Produces 21 to 25 bp dsRNAs (siRNAs) which target the selective destruction of homologous RNAs leading to sequence-specific suppression of gene expression, called post-transcriptional gene silencing (PTGS). Part of a broad host defense response against viral infection and transposons. This is Dicer-like protein 2-2 (dcl2-2) from Aspergillus niger (strain ATCC MYA-4892 / CBS 513.88 / FGSC A1513).